The chain runs to 689 residues: Glycine--tRNA ligase beta subunit (689 aa).

Belongs to the class-II aminoacyl-tRNA synthetase family. Tetramer of two alpha and two beta subunits.

It localises to the cytoplasm. The enzyme catalyses tRNA(Gly) + glycine + ATP = glycyl-tRNA(Gly) + AMP + diphosphate. The sequence is that of Glycine--tRNA ligase beta subunit from Escherichia coli O7:K1 (strain IAI39 / ExPEC).